The primary structure comprises 417 residues: Snake venom metalloproteinase aculysin-1 (417 aa).

Residues 1–20 form the signal peptide; it reads MIQVLLVTICLAAFPYQGSS. A propeptide spanning residues 21-189 is cleaved from the precursor; that stretch reads IMLESGKVND…KKPSWLNLTP (169 aa). The region spanning 197-392 is the Peptidase M12B domain; sequence TSVNLQLIVD…KKPKCIHKKS (196 aa). Intrachain disulfides connect Cys-308/Cys-387, Cys-349/Cys-371, and Cys-351/Cys-354. His-333 provides a ligand contact to Zn(2+). Glu-334 is an active-site residue. Residues His-337 and His-343 each coordinate Zn(2+). Positions 393–417 are excised as a propeptide; the sequence is LKTDTVSTSVSGNEPLDDNVDGFHA. Residues 398–417 form a disordered region; the sequence is VSTSVSGNEPLDDNVDGFHA. Over residues 407–417 the composition is skewed to acidic residues; sequence PLDDNVDGFHA.

Belongs to the venom metalloproteinase (M12B) family. P-I subfamily. In terms of assembly, monomer. It depends on Zn(2+) as a cofactor. Expressed by the venom gland.

The protein localises to the secreted. In terms of biological role, this protein is an alkaline zinc metalloprotease from snake venom that possesses weak hemorrhagic activity. This Deinagkistrodon acutus (Hundred-pace snake) protein is Snake venom metalloproteinase aculysin-1.